A 266-amino-acid polypeptide reads, in one-letter code: BTB/POZ domain-containing protein KCTD2 (266 aa).

An N-acetylalanine modification is found at A2. A disordered region spans residues G38–R79. Over residues T53–A63 the composition is skewed to low complexity. The BTB domain maps to Q76 to E174.

This Mus musculus (Mouse) protein is BTB/POZ domain-containing protein KCTD2 (Kctd2).